The primary structure comprises 61 residues: Small ribosomal subunit protein uS14 (61 aa).

Cys-24, Cys-27, Cys-40, and Cys-43 together coordinate Zn(2+).

The protein belongs to the universal ribosomal protein uS14 family. Zinc-binding uS14 subfamily. In terms of assembly, part of the 30S ribosomal subunit. Contacts proteins S3 and S10. Zn(2+) serves as cofactor.

Its function is as follows. Binds 16S rRNA, required for the assembly of 30S particles and may also be responsible for determining the conformation of the 16S rRNA at the A site. The chain is Small ribosomal subunit protein uS14 from Rhodococcus erythropolis (strain PR4 / NBRC 100887).